Here is a 168-residue protein sequence, read N- to C-terminus: uncharacterized protein (168 aa).

Positions 1–21 (MKLLKALAVLSLATISSHSFA) form a signal peptide, or 19.

This is an uncharacterized protein from Haemophilus influenzae (strain ATCC 51907 / DSM 11121 / KW20 / Rd).